We begin with the raw amino-acid sequence, 755 residues long: DNA ligase 1 (755 aa).

The N-terminal 44 residues, 1-44, are a transit peptide targeting the mitochondrion; that stretch reads MRRLLTGCLLSSARPLKSRLPLLMSSSLPSSAGKKPKQATLARF. Arg-2 carries the N-acetylserine modification. Polar residues predominate over residues 47–60; the sequence is SMKNKPTEGTPSPK. Disordered stretches follow at residues 47-79 and 97-127; these read SMKN…GEEE and PSSM…QRLV. Phosphoserine occurs at positions 58 and 75. The segment covering 102–114 has biased composition (low complexity); the sequence is SNFSSIPSSAPSS. Residues Ser-119 and Ser-123 each carry the phosphoserine modification. Residues 309–318 are interaction with target DNA; that stretch reads KLRIGLAEKT. Glu-417 serves as a coordination point for ATP. Lys-419 serves as the catalytic N6-AMP-lysine intermediate. 2 residues coordinate ATP: Arg-424 and Arg-440. Glu-472 is a binding site for Mg(2+). The segment at 493 to 495 is interaction with target DNA; it reads KRK. Glu-571 contributes to the Mg(2+) binding site. Residues Lys-576, Arg-590, and Lys-596 each contribute to the ATP site.

Belongs to the ATP-dependent DNA ligase family. The cofactor is Mg(2+).

It is found in the mitochondrion. The protein resides in the nucleus. The catalysed reaction is ATP + (deoxyribonucleotide)n-3'-hydroxyl + 5'-phospho-(deoxyribonucleotide)m = (deoxyribonucleotide)n+m + AMP + diphosphate.. Its function is as follows. DNA ligase that seals nicks in double-stranded DNA during DNA replication, DNA recombination and DNA repair. The mitochondrial form is required for mitochondrial DNA maintenance but is non-essential while the nuclear form is essential for cell viability. In Saccharomyces cerevisiae (strain ATCC 204508 / S288c) (Baker's yeast), this protein is DNA ligase 1 (CDC9).